The chain runs to 98 residues: NADH-ubiquinone oxidoreductase chain 4L (98 aa).

A run of 3 helical transmembrane segments spans residues Gln-2 to Phe-22, Phe-26 to Ile-46, and Phe-59 to Val-79.

It belongs to the complex I subunit 4L family. Core subunit of respiratory chain NADH dehydrogenase (Complex I) which is composed of 45 different subunits.

It localises to the mitochondrion inner membrane. It catalyses the reaction a ubiquinone + NADH + 5 H(+)(in) = a ubiquinol + NAD(+) + 4 H(+)(out). Functionally, core subunit of the mitochondrial membrane respiratory chain NADH dehydrogenase (Complex I) which catalyzes electron transfer from NADH through the respiratory chain, using ubiquinone as an electron acceptor. Part of the enzyme membrane arm which is embedded in the lipid bilayer and involved in proton translocation. In Echinosorex gymnura (Moon rat), this protein is NADH-ubiquinone oxidoreductase chain 4L (MT-ND4L).